The primary structure comprises 260 residues: Cell wall synthesis protein Wag31 (260 aa).

The stretch at 31–64 (FLDLVENELTRLIEENSDLRQRINELDQELAAGG) forms a coiled coil. Position 73 is a phosphothreonine (Thr-73). A coiled-coil region spans residues 161–196 (MLADAQSRSEAQLRQAQEKADALQADAERKHSEIMG). A disordered region spans residues 233-260 (ELGQRGSAAPVDSNADAGGFDQFNRGKN).

It belongs to the DivIVA family. As to quaternary structure, forms homooligomers. In terms of processing, phosphorylated by PknA. Phosphorylation enhances polar localization, which in turn heightens polar peptidoglycan biosynthesis.

The protein localises to the cytoplasm. Functionally, important for maintaining cell shape and cell wall integrity by localizing peptidoglycan synthesis to the cell poles. The polypeptide is Cell wall synthesis protein Wag31 (wag31) (Mycobacterium tuberculosis (strain CDC 1551 / Oshkosh)).